An 877-amino-acid polypeptide reads, in one-letter code: Polycomb protein Scm (877 aa).

Positions 1 to 57 (MSGGRDSSTSSGSNSAAPGASTNATSSASASASSTSTSASPGSTTSPASTQRQRGRP) are disordered. Residues 7 to 50 (SSTSSGSNSAAPGASTNATSSASASASSTSTSASPGSTTSPAST) show a composition bias toward low complexity. An FCS-type zinc finger spans residues 54–93 (RGRPAKRATCTWCGEGKLPLQYVLPTQTGKKEFCSETCIA). Residues cysteine 63, cysteine 66, cysteine 87, and cysteine 91 each contribute to the Zn(2+) site. MBT repeat units lie at residues 175–273 (FDWD…LQPP) and 281–382 (SSWP…MQPP). 3 disordered regions span residues 535-621 (NSRK…SNKV), 652-692 (TNTN…GGSA), and 713-735 (ANVK…ASLP). Threonine 546 carries the phosphothreonine modification. Residues serine 549 and serine 550 each carry the phosphoserine modification. The span at 560-569 (QSNSATTSPS) shows a compositional bias: polar residues. Serine 585 carries the post-translational modification Phosphoserine. Residues 598–620 (ASQQNSNHSLNNNNNSASKSSNK) show a composition bias toward low complexity. Residues 724–735 (SPTTLSSSASLP) show a composition bias toward low complexity. Residues 806-876 (WTIEEVIQYI…KVNGRRNNLA (71 aa)) enclose the SAM domain.

It belongs to the SCM family. In terms of assembly, scm associates with the PRC1 core complex containing PSC, PC, PH and Sce/RING1. Forms homotypic and heterotypic interactions. Interacts with the SAM domain of ph-p via its SAM domain in vitro. Interacts with corto in vitro.

The protein resides in the nucleus. Its function is as follows. Polycomb group (PcG) protein. PcG proteins act by forming multiprotein complexes, which are required to maintain the transcriptionally repressive state of homeotic genes throughout development. PcG proteins are not required to initiate repression, but to maintain it during later stages of development. They probably act via the methylation of histones, rendering chromatin heritably changed in its expressibility. This is Polycomb protein Scm from Drosophila melanogaster (Fruit fly).